The chain runs to 326 residues: Regulation of nuclear pre-mRNA domain-containing protein 1B (326 aa).

The residue at position 2 (Ser-2) is an N-acetylserine. One can recognise a CID domain in the interval 2 to 133; the sequence is SSFSESALEK…QLKLSMEDSK (132 aa). The span at 128 to 144 shows a compositional bias: basic and acidic residues; the sequence is SMEDSKSPPPKAAEEKK. The disordered stretch occupies residues 128 to 148; it reads SMEDSKSPPPKAAEEKKSLKR. 2 positions are modified to phosphoserine: Ser-132 and Ser-134. At Tyr-161 the chain carries Phosphotyrosine. Residues Ser-166 and Ser-299 each carry the phosphoserine modification.

This sequence belongs to the UPF0400 (RTT103) family. As to quaternary structure, homodimer. May form a heterodimer with RPRD1A. Associates with RPAP2. Associates with the RNA polymerase II complex. Widely expressed in the adult with highest levels in liver, colon, prostate and uterus and lowest levels in heart and kidney. Not detected in rectum.

The protein resides in the nucleus. Functionally, interacts with phosphorylated C-terminal heptapeptide repeat domain (CTD) of the largest RNA polymerase II subunit POLR2A, and participates in dephosphorylation of the CTD by RPAP2. Transcriptional regulator which enhances expression of CCND1. Promotes binding of RNA polymerase II to the CCDN1 promoter and to the termination region before the poly-A site but decreases its binding after the poly-A site. Prevents RNA polymerase II from reading through the 3' end termination site and may allow it to be recruited back to the promoter through promotion of the formation of a chromatin loop. Also enhances the transcription of a number of other cell cycle-related genes including CDK2, CDK4, CDK6 and cyclin-E but not CDKN1A, CDKN1B or cyclin-A. Promotes cell proliferation. The chain is Regulation of nuclear pre-mRNA domain-containing protein 1B (Rprd1b) from Mus musculus (Mouse).